Reading from the N-terminus, the 184-residue chain is ATP synthase subunit b, chloroplastic (184 aa).

The helical transmembrane segment at 27-49 threads the bilayer; it reads LATNPINLSVVFGVLIFFGKGVL.

The protein belongs to the ATPase B chain family. In terms of assembly, F-type ATPases have 2 components, F(1) - the catalytic core - and F(0) - the membrane proton channel. F(1) has five subunits: alpha(3), beta(3), gamma(1), delta(1), epsilon(1). F(0) has four main subunits: a(1), b(1), b'(1) and c(10-14). The alpha and beta chains form an alternating ring which encloses part of the gamma chain. F(1) is attached to F(0) by a central stalk formed by the gamma and epsilon chains, while a peripheral stalk is formed by the delta, b and b' chains.

Its subcellular location is the plastid. The protein localises to the chloroplast thylakoid membrane. In terms of biological role, f(1)F(0) ATP synthase produces ATP from ADP in the presence of a proton or sodium gradient. F-type ATPases consist of two structural domains, F(1) containing the extramembraneous catalytic core and F(0) containing the membrane proton channel, linked together by a central stalk and a peripheral stalk. During catalysis, ATP synthesis in the catalytic domain of F(1) is coupled via a rotary mechanism of the central stalk subunits to proton translocation. Component of the F(0) channel, it forms part of the peripheral stalk, linking F(1) to F(0). The polypeptide is ATP synthase subunit b, chloroplastic (Lobularia maritima (Sweet alyssum)).